A 245-amino-acid polypeptide reads, in one-letter code: uncharacterized protein (245 aa).

This is an uncharacterized protein from Rhodobacter capsulatus (Rhodopseudomonas capsulata).